The following is a 378-amino-acid chain: Glutamate 5-kinase (378 aa).

K14 contacts ATP. S54, D141, and N153 together coordinate substrate. 173–174 contributes to the ATP binding site; it reads SD. Residues 279–356 enclose the PUA domain; sequence AGRLTVDAGA…DEISAILGYD (78 aa).

It belongs to the glutamate 5-kinase family.

Its subcellular location is the cytoplasm. The catalysed reaction is L-glutamate + ATP = L-glutamyl 5-phosphate + ADP. It functions in the pathway amino-acid biosynthesis; L-proline biosynthesis; L-glutamate 5-semialdehyde from L-glutamate: step 1/2. Catalyzes the transfer of a phosphate group to glutamate to form L-glutamate 5-phosphate. The chain is Glutamate 5-kinase from Brucella abortus (strain S19).